The following is an 85-amino-acid chain: Cytochrome c2 (85 aa).

Heme c is bound by residues Cys-12, Cys-15, His-16, and Met-61.

It belongs to the cytochrome c family. Binds 1 heme c group covalently per subunit.

Its function is as follows. Cytochrome c2 is found mainly in purple, non-sulfur, photosynthetic bacteria where it functions as the electron donor to the oxidized bacteriochlorophyll in the photophosphorylation pathway. However, it may also have a role in the respiratory chain and is found in some non-photosynthetic bacteria. In Rubrivivax gelatinosus (Rhodocyclus gelatinosus), this protein is Cytochrome c2.